A 201-amino-acid polypeptide reads, in one-letter code: Putative manganese efflux pump MntP 2 (201 aa).

6 helical membrane-spanning segments follow: residues 3–23 (LISVILISIGLSMDAFAVSIT), 39–59 (IGLFFGGFQALMPLIGWSIGI), 65–85 (IAALDHWIALILLSIIGGKMI), 116–136 (LILLAIATSIDALAVGVSFAF), 141–161 (IINTIVIIGSITFVICFIGVM), and 176–196 (ILGGVVLILIGVKIFIQHTNI).

Belongs to the MntP (TC 9.B.29) family.

The protein resides in the cell membrane. In terms of biological role, probably functions as a manganese efflux pump. This is Putative manganese efflux pump MntP 2 from Clostridium botulinum (strain Langeland / NCTC 10281 / Type F).